The following is a 98-amino-acid chain: Large ribosomal subunit protein bL25 (98 aa).

Belongs to the bacterial ribosomal protein bL25 family. As to quaternary structure, part of the 50S ribosomal subunit; part of the 5S rRNA/L5/L18/L25 subcomplex. Contacts the 5S rRNA. Binds to the 5S rRNA independently of L5 and L18.

In terms of biological role, this is one of the proteins that binds to the 5S RNA in the ribosome where it forms part of the central protuberance. The chain is Large ribosomal subunit protein bL25 from Synechocystis sp. (strain ATCC 27184 / PCC 6803 / Kazusa).